The sequence spans 110 residues: Large ribosomal subunit protein uL22 (110 aa).

The protein belongs to the universal ribosomal protein uL22 family. As to quaternary structure, part of the 50S ribosomal subunit.

Functionally, this protein binds specifically to 23S rRNA; its binding is stimulated by other ribosomal proteins, e.g. L4, L17, and L20. It is important during the early stages of 50S assembly. It makes multiple contacts with different domains of the 23S rRNA in the assembled 50S subunit and ribosome. In terms of biological role, the globular domain of the protein is located near the polypeptide exit tunnel on the outside of the subunit, while an extended beta-hairpin is found that lines the wall of the exit tunnel in the center of the 70S ribosome. The sequence is that of Large ribosomal subunit protein uL22 from Mycoplasma mobile (strain ATCC 43663 / 163K / NCTC 11711) (Mesomycoplasma mobile).